A 187-amino-acid chain; its full sequence is Adenine phosphoribosyltransferase (187 aa).

This sequence belongs to the purine/pyrimidine phosphoribosyltransferase family. As to quaternary structure, homodimer.

Its subcellular location is the cytoplasm. The enzyme catalyses AMP + diphosphate = 5-phospho-alpha-D-ribose 1-diphosphate + adenine. Its pathway is purine metabolism; AMP biosynthesis via salvage pathway; AMP from adenine: step 1/1. In terms of biological role, catalyzes a salvage reaction resulting in the formation of AMP, that is energically less costly than de novo synthesis. The chain is Adenine phosphoribosyltransferase from Paracoccus denitrificans (strain Pd 1222).